Reading from the N-terminus, the 442-residue chain is Probable protein phosphatase 2C 15 (442 aa).

In terms of domain architecture, PPM-type phosphatase spans 35–303 (AAERPELQVG…DDTTCIVVDI (269 aa)). Asp-80, Gly-81, Asp-255, and Asp-294 together coordinate Mn(2+). The span at 420–434 (KKEAMEGKRRSRDSS) shows a compositional bias: basic and acidic residues. Positions 420-442 (KKEAMEGKRRSRDSSSRNSGSSE) are disordered.

It belongs to the PP2C family. Mg(2+) serves as cofactor. Requires Mn(2+) as cofactor.

The catalysed reaction is O-phospho-L-seryl-[protein] + H2O = L-seryl-[protein] + phosphate. It carries out the reaction O-phospho-L-threonyl-[protein] + H2O = L-threonyl-[protein] + phosphate. The polypeptide is Probable protein phosphatase 2C 15 (Oryza sativa subsp. japonica (Rice)).